A 459-amino-acid polypeptide reads, in one-letter code: ATP synthase subunit beta 1 (459 aa).

Position 148 to 155 (148 to 155) interacts with ATP; sequence GGAGVGKT.

It belongs to the ATPase alpha/beta chains family. F-type ATPases have 2 components, CF(1) - the catalytic core - and CF(0) - the membrane proton channel. CF(1) has five subunits: alpha(3), beta(3), gamma(1), delta(1), epsilon(1). CF(0) has three main subunits: a(1), b(2) and c(9-12). The alpha and beta chains form an alternating ring which encloses part of the gamma chain. CF(1) is attached to CF(0) by a central stalk formed by the gamma and epsilon chains, while a peripheral stalk is formed by the delta and b chains.

The protein resides in the cell inner membrane. It catalyses the reaction ATP + H2O + 4 H(+)(in) = ADP + phosphate + 5 H(+)(out). In terms of biological role, produces ATP from ADP in the presence of a proton gradient across the membrane. The catalytic sites are hosted primarily by the beta subunits. In Nitrosospira multiformis (strain ATCC 25196 / NCIMB 11849 / C 71), this protein is ATP synthase subunit beta 1.